The primary structure comprises 341 residues: HTH-type transcriptional repressor PurR (341 aa).

Residues 2-56 (ATIKDVAKRANVSTTTVSHVINKTRFVAEETRNAVWAAIKELHYSPSAVARSLKV) form the HTH lacI-type domain. The H-T-H motif DNA-binding region spans 4–23 (IKDVAKRANVSTTTVSHVIN). Residues 48 to 56 (SAVARSLKV) mediate DNA binding. Hypoxanthine-binding residues include tyrosine 73, arginine 190, threonine 192, phenylalanine 221, and aspartate 275.

In terms of assembly, homodimer.

It participates in purine metabolism; purine nucleotide biosynthesis [regulation]. Functionally, is the main repressor of the genes involved in the de novo synthesis of purine nucleotides, regulating purB, purC, purEK, purF, purHD, purL, purMN and guaBA expression. PurR is allosterically activated to bind its cognate DNA by binding the purine corepressors, hypoxanthine or guanine, thereby effecting transcription repression. This Shigella sonnei (strain Ss046) protein is HTH-type transcriptional repressor PurR.